The sequence spans 306 residues: uncharacterized protein (306 aa).

The next 8 membrane-spanning stretches (helical) occupy residues 7 to 27 (LESWFFIAPALLLAVLSGYLA), 30 to 50 (VGIINIAINGGMVFGGLFMAL), 68 to 88 (LFITIPLSVLFSSVIGCLFAL), 95 to 115 (ADHVIVGTGINLLASGITLFI), 144 to 164 (AIGVFVFSLLLIGFVWYLMSF), 194 to 214 (IGAICSMMVAGLSGSLFVLSV), 232 to 252 (IAIMIISMWRIIPSIFIGLIF), and 274 to 294 (TIPFIISLLVMLLFGFLNVAP).

It localises to the cell membrane. This is an uncharacterized protein from Mycoplasma genitalium (strain ATCC 33530 / DSM 19775 / NCTC 10195 / G37) (Mycoplasmoides genitalium).